Reading from the N-terminus, the 101-residue chain is uncharacterized protein (101 aa).

An N-terminal signal peptide occupies residues 1–23; sequence MERRTGVVLIIFVTFCEAMMARA. The chain crosses the membrane as a helical span at residues 38-58; that stretch reads FLLFIIHTSCTMVAFIIGNLA.

Its subcellular location is the host membrane. This is an uncharacterized protein from Cryphonectria parasitica (Chestnut blight fungus).